The following is a 239-amino-acid chain: Peptidyl-tRNA hydrolase (239 aa).

Tyr14 contributes to the tRNA binding site. His19 serves as the catalytic Proton acceptor. Residues Phe64, Asn66, and Asn112 each coordinate tRNA. Residues 186 to 239 are disordered; that stretch reads RTAPPRPSTGTGRPPAKTPARAEEPPAPAASPAPATAPLPDARSPLQKLVDRFK. The segment covering 193–204 has biased composition (low complexity); that stretch reads STGTGRPPAKTP. A compositionally biased stretch (pro residues) spans 210–222; the sequence is PPAPAASPAPATA.

This sequence belongs to the PTH family. Monomer.

The protein localises to the cytoplasm. The enzyme catalyses an N-acyl-L-alpha-aminoacyl-tRNA + H2O = an N-acyl-L-amino acid + a tRNA + H(+). Hydrolyzes ribosome-free peptidyl-tRNAs (with 1 or more amino acids incorporated), which drop off the ribosome during protein synthesis, or as a result of ribosome stalling. Functionally, catalyzes the release of premature peptidyl moieties from peptidyl-tRNA molecules trapped in stalled 50S ribosomal subunits, and thus maintains levels of free tRNAs and 50S ribosomes. This is Peptidyl-tRNA hydrolase from Ruegeria pomeroyi (strain ATCC 700808 / DSM 15171 / DSS-3) (Silicibacter pomeroyi).